A 429-amino-acid chain; its full sequence is Probable M18 family aminopeptidase 2 (429 aa).

Zn(2+) contacts are provided by His82, His156, and His401.

Belongs to the peptidase M18 family. It depends on Zn(2+) as a cofactor.

The polypeptide is Probable M18 family aminopeptidase 2 (Pseudomonas fluorescens (strain SBW25)).